Here is a 242-residue protein sequence, read N- to C-terminus: Small ribosomal subunit protein uS2 (242 aa).

It belongs to the universal ribosomal protein uS2 family.

The polypeptide is Small ribosomal subunit protein uS2 (Shewanella oneidensis (strain ATCC 700550 / JCM 31522 / CIP 106686 / LMG 19005 / NCIMB 14063 / MR-1)).